Reading from the N-terminus, the 64-residue chain is Small ribosomal subunit protein bS18c (64 aa).

It belongs to the bacterial ribosomal protein bS18 family. Part of the 30S ribosomal subunit.

The protein localises to the plastid. The protein resides in the chloroplast. The chain is Small ribosomal subunit protein bS18c (rps18) from Bigelowiella natans (Pedinomonas minutissima).